The following is a 923-amino-acid chain: Leucine--tRNA ligase (923 aa).

A 'HIGH' region motif is present at residues proline 41 to histidine 52. Positions lysine 698–serine 702 match the 'KMSKS' region motif. Lysine 701 contacts ATP.

The protein belongs to the class-I aminoacyl-tRNA synthetase family.

The protein resides in the cytoplasm. It carries out the reaction tRNA(Leu) + L-leucine + ATP = L-leucyl-tRNA(Leu) + AMP + diphosphate. The chain is Leucine--tRNA ligase from Amoebophilus asiaticus (strain 5a2).